The chain runs to 101 residues: Large ribosomal subunit protein bL21 (101 aa).

This sequence belongs to the bacterial ribosomal protein bL21 family. As to quaternary structure, part of the 50S ribosomal subunit. Contacts protein L20.

In terms of biological role, this protein binds to 23S rRNA in the presence of protein L20. In Sulfurovum sp. (strain NBC37-1), this protein is Large ribosomal subunit protein bL21.